The primary structure comprises 368 residues: Nicotinamide/nicotinic acid mononucleotide adenylyltransferase (368 aa).

Positions methionine 1–proline 14 are enriched in polar residues. Positions methionine 1–serine 25 are disordered. A Phosphoserine modification is found at serine 36. The interval alanine 47–lysine 78 is disordered. The segment covering arginine 61–proline 72 has biased composition (polar residues). A phosphoserine mark is found at serine 75 and serine 85. NAD(+) is bound by residues serine 135 and phenylalanine 136. Histidine 143 contributes to the ATP binding site. NAD(+) is bound by residues threonine 215, glycine 250, aspartate 252, tryptophan 263, arginine 282, and asparagine 313. Threonine 318 to arginine 321 is a binding site for ATP.

This sequence belongs to the eukaryotic NMN adenylyltransferase family. A divalent metal cation serves as cofactor.

The protein localises to the cytoplasm. It localises to the nucleus. The enzyme catalyses beta-nicotinamide D-ribonucleotide + ATP + H(+) = diphosphate + NAD(+). It carries out the reaction nicotinate beta-D-ribonucleotide + ATP + H(+) = deamido-NAD(+) + diphosphate. It functions in the pathway cofactor biosynthesis; NAD(+) biosynthesis; deamido-NAD(+) from nicotinate D-ribonucleotide: step 1/1. Its pathway is cofactor biosynthesis; NAD(+) biosynthesis; NAD(+) from nicotinamide D-ribonucleotide: step 1/1. Catalyzes the formation of NAD(+) from nicotinamide mononucleotide (NMN) and ATP. Can also use the deamidated form; nicotinic acid mononucleotide (NaMN) as substrate to form deamido-NAD(+) (NaAD). Key enzyme in both de novo and salvage pathways for NAD(+) biosynthesis. In Schizosaccharomyces pombe (strain 972 / ATCC 24843) (Fission yeast), this protein is Nicotinamide/nicotinic acid mononucleotide adenylyltransferase.